Reading from the N-terminus, the 199-residue chain is Prolactin (199 aa).

An intrachain disulfide couples Cys-4 to Cys-11. Residues Ser-26, Ser-34, and Ser-90 each carry the phosphoserine modification. 2 disulfides stabilise this stretch: Cys-58–Cys-174 and Cys-191–Cys-199.

The protein belongs to the somatotropin/prolactin family. As to quaternary structure, interacts with PRLR.

Its subcellular location is the secreted. In terms of biological role, prolactin acts primarily on the mammary gland by promoting lactation. The polypeptide is Prolactin (PRL) (Loxodonta africana (African elephant)).